The sequence spans 301 residues: uncharacterized protein (301 aa).

2 disordered regions span residues D167 to R186 and A225 to S244. The span at L170 to V181 shows a compositional bias: polar residues. Residues S226–S237 show a composition bias toward low complexity.

This is an uncharacterized protein from Mus musculus (Mouse).